The following is a 264-amino-acid chain: Thymidylate synthase (264 aa).

Arg21 contacts dUMP. A (6R)-5,10-methylene-5,6,7,8-tetrahydrofolate-binding site is contributed by His51. 126 to 127 (RR) lines the dUMP pocket. The active-site Nucleophile is Cys146. DUMP-binding positions include 166–169 (RSCD), Asn177, and 207–209 (HLY). Position 169 (Asp169) interacts with (6R)-5,10-methylene-5,6,7,8-tetrahydrofolate. Position 263 (Ala263) interacts with (6R)-5,10-methylene-5,6,7,8-tetrahydrofolate.

This sequence belongs to the thymidylate synthase family. Bacterial-type ThyA subfamily. In terms of assembly, homodimer.

It localises to the cytoplasm. The enzyme catalyses dUMP + (6R)-5,10-methylene-5,6,7,8-tetrahydrofolate = 7,8-dihydrofolate + dTMP. It participates in pyrimidine metabolism; dTTP biosynthesis. Catalyzes the reductive methylation of 2'-deoxyuridine-5'-monophosphate (dUMP) to 2'-deoxythymidine-5'-monophosphate (dTMP) while utilizing 5,10-methylenetetrahydrofolate (mTHF) as the methyl donor and reductant in the reaction, yielding dihydrofolate (DHF) as a by-product. This enzymatic reaction provides an intracellular de novo source of dTMP, an essential precursor for DNA biosynthesis. This chain is Thymidylate synthase, found in Baumannia cicadellinicola subsp. Homalodisca coagulata.